Here is a 169-residue protein sequence, read N- to C-terminus: Ureidoglycolate lyase (169 aa).

It belongs to the ureidoglycolate lyase family. As to quaternary structure, homodimer. Ni(2+) serves as cofactor.

It carries out the reaction (S)-ureidoglycolate = urea + glyoxylate. The protein operates within nitrogen metabolism; (S)-allantoin degradation. Catalyzes the catabolism of the allantoin degradation intermediate (S)-ureidoglycolate, generating urea and glyoxylate. Involved in the utilization of allantoin as nitrogen source. This Brucella ovis (strain ATCC 25840 / 63/290 / NCTC 10512) protein is Ureidoglycolate lyase.